We begin with the raw amino-acid sequence, 340 residues long: Glyceraldehyde-3-phosphate dehydrogenase (340 aa).

Residues 11–12 (SI) and glycine 111 contribute to the NAD(+) site. Residue 140–142 (SCN) coordinates D-glyceraldehyde 3-phosphate. The active-site Nucleophile is cysteine 141. Position 169 (arginine 169) interacts with NAD(+). A D-glyceraldehyde 3-phosphate-binding site is contributed by 195–196 (HG). An NAD(+)-binding site is contributed by glutamine 303.

It belongs to the glyceraldehyde-3-phosphate dehydrogenase family. In terms of assembly, homotetramer.

It localises to the cytoplasm. The enzyme catalyses D-glyceraldehyde 3-phosphate + phosphate + NADP(+) = (2R)-3-phospho-glyceroyl phosphate + NADPH + H(+). The catalysed reaction is D-glyceraldehyde 3-phosphate + phosphate + NAD(+) = (2R)-3-phospho-glyceroyl phosphate + NADH + H(+). It participates in carbohydrate degradation; glycolysis; pyruvate from D-glyceraldehyde 3-phosphate: step 1/5. The chain is Glyceraldehyde-3-phosphate dehydrogenase from Methanococcus maripaludis (strain DSM 14266 / JCM 13030 / NBRC 101832 / S2 / LL).